A 103-amino-acid chain; its full sequence is MANLFIRKMVNPLLYLSRHTVKPRALSTFLFGSIRGAAPVAVEPGAAVRSLLSPGLLPHLLPALGFKNKTVLKKRCKDCYLVKRRGRWYVYCKTHPRHKQRQM.

The protein belongs to the bacterial ribosomal protein bL36 family. As to quaternary structure, component of the mitochondrial large ribosomal subunit (mt-LSU). Mature mammalian 55S mitochondrial ribosomes consist of a small (28S) and a large (39S) subunit. The 28S small subunit contains a 12S ribosomal RNA (12S mt-rRNA) and 30 different proteins. The 39S large subunit contains a 16S rRNA (16S mt-rRNA), a copy of mitochondrial valine transfer RNA (mt-tRNA(Val)), which plays an integral structural role, and 52 different proteins. bL36m has a zinc binding site.

The protein localises to the mitochondrion. This is Large ribosomal subunit protein bL36m (MRPL36) from Homo sapiens (Human).